A 152-amino-acid chain; its full sequence is Clitocypin-2 (152 aa).

The protein belongs to the protease inhibitor I48 family. As to quaternary structure, homodimer. As to expression, expressed in all analyzed tissues, but expression was higher in the pileus and in the lower part of the stipe.

Binds and inhibits cysteine proteinases. Inhibits most strongly papain and cathepsin L, more weakly bromelain and cathepsin B while it is completely ineffective against cathepsin H. In Clitocybe nebularis (Clouded agaric), this protein is Clitocypin-2 (clt2).